The following is a 1381-amino-acid chain: DNA-directed RNA polymerase subunit beta'' (1381 aa).

The Zn(2+) site is built by Cys-224, Cys-296, Cys-303, and Cys-306.

The protein belongs to the RNA polymerase beta' chain family. RpoC2 subfamily. In plastids the minimal PEP RNA polymerase catalytic core is composed of four subunits: alpha, beta, beta', and beta''. When a (nuclear-encoded) sigma factor is associated with the core the holoenzyme is formed, which can initiate transcription. Requires Zn(2+) as cofactor.

The protein resides in the plastid. It localises to the chloroplast. It carries out the reaction RNA(n) + a ribonucleoside 5'-triphosphate = RNA(n+1) + diphosphate. DNA-dependent RNA polymerase catalyzes the transcription of DNA into RNA using the four ribonucleoside triphosphates as substrates. The sequence is that of DNA-directed RNA polymerase subunit beta'' from Drimys granadensis.